We begin with the raw amino-acid sequence, 457 residues long: Bifunctional F420 biosynthesis protein FbiB (457 aa).

Residues 1–253 (MTSSDSHRSA…NGPDDLFWLG (253 aa)) form a coenzyme F420:L-glutamate ligase region. GTP contacts are provided by residues 29 to 32 (LPEF), S59, and K64. D118 serves as a coordination point for a divalent metal cation. N121 is a binding site for GTP. A divalent metal cation is bound by residues D159 and T160. A dehydro-coenzyme F420-0 reductase region spans residues 254–457 (TTEALELGRQ…VRVADLLLRK (204 aa)). FMN contacts are provided by residues 269–273 (RRSVR) and A297. D329 is a binding site for coenzyme F420-(gamma-Glu)n. G408 and R445 together coordinate FMN.

It in the N-terminal section; belongs to the CofE family. Mg(2+) serves as cofactor. Mn(2+) is required as a cofactor. The cofactor is K(+).

The catalysed reaction is oxidized coenzyme F420-0 + GTP + L-glutamate = oxidized coenzyme F420-1 + GDP + phosphate + H(+). It carries out the reaction oxidized coenzyme F420-1 + GTP + L-glutamate = oxidized coenzyme F420-2 + GDP + phosphate + H(+). It catalyses the reaction oxidized coenzyme F420-(gamma-L-Glu)(n) + GTP + L-glutamate = oxidized coenzyme F420-(gamma-L-Glu)(n+1) + GDP + phosphate + H(+). The enzyme catalyses oxidized coenzyme F420-0 + FMN + H(+) = dehydro coenzyme F420-0 + FMNH2. It participates in cofactor biosynthesis; coenzyme F420 biosynthesis. Functionally, bifunctional enzyme that catalyzes the GTP-dependent successive addition of multiple gamma-linked L-glutamates to the L-lactyl phosphodiester of 7,8-didemethyl-8-hydroxy-5-deazariboflavin (F420-0) to form polyglutamated F420 derivatives, and the FMNH2-dependent reduction of dehydro-F420-0 to form F420-0. The chain is Bifunctional F420 biosynthesis protein FbiB from Mycobacterium leprae (strain TN).